The primary structure comprises 286 residues: Glycine--tRNA ligase alpha subunit (286 aa).

The protein belongs to the class-II aminoacyl-tRNA synthetase family. In terms of assembly, tetramer of two alpha and two beta subunits.

The protein resides in the cytoplasm. The catalysed reaction is tRNA(Gly) + glycine + ATP = glycyl-tRNA(Gly) + AMP + diphosphate. This is Glycine--tRNA ligase alpha subunit from Thermotoga sp. (strain RQ2).